A 312-amino-acid polypeptide reads, in one-letter code: Ribose-phosphate pyrophosphokinase (312 aa).

ATP-binding positions include 34–36 (DGE) and 93–94 (RQ). Mg(2+)-binding residues include His-128 and Asp-167. Lys-191 is a catalytic residue. Residues Arg-193 and Asp-217 each contribute to the D-ribose 5-phosphate site.

Belongs to the ribose-phosphate pyrophosphokinase family. Class I subfamily. As to quaternary structure, homohexamer. It depends on Mg(2+) as a cofactor.

Its subcellular location is the cytoplasm. It catalyses the reaction D-ribose 5-phosphate + ATP = 5-phospho-alpha-D-ribose 1-diphosphate + AMP + H(+). The protein operates within metabolic intermediate biosynthesis; 5-phospho-alpha-D-ribose 1-diphosphate biosynthesis; 5-phospho-alpha-D-ribose 1-diphosphate from D-ribose 5-phosphate (route I): step 1/1. In terms of biological role, involved in the biosynthesis of the central metabolite phospho-alpha-D-ribosyl-1-pyrophosphate (PRPP) via the transfer of pyrophosphoryl group from ATP to 1-hydroxyl of ribose-5-phosphate (Rib-5-P). This Baumannia cicadellinicola subsp. Homalodisca coagulata protein is Ribose-phosphate pyrophosphokinase.